The following is a 448-amino-acid chain: Probable glycine dehydrogenase (decarboxylating) subunit 1 (448 aa).

Belongs to the GcvP family. N-terminal subunit subfamily. As to quaternary structure, the glycine cleavage system is composed of four proteins: P, T, L and H. In this organism, the P 'protein' is a heterodimer of two subunits.

The enzyme catalyses N(6)-[(R)-lipoyl]-L-lysyl-[glycine-cleavage complex H protein] + glycine + H(+) = N(6)-[(R)-S(8)-aminomethyldihydrolipoyl]-L-lysyl-[glycine-cleavage complex H protein] + CO2. In terms of biological role, the glycine cleavage system catalyzes the degradation of glycine. The P protein binds the alpha-amino group of glycine through its pyridoxal phosphate cofactor; CO(2) is released and the remaining methylamine moiety is then transferred to the lipoamide cofactor of the H protein. The polypeptide is Probable glycine dehydrogenase (decarboxylating) subunit 1 (Staphylococcus aureus (strain COL)).